The following is a 262-amino-acid chain: Tryptophan synthase alpha chain (262 aa).

Active-site proton acceptor residues include E48 and D59.

This sequence belongs to the TrpA family. As to quaternary structure, tetramer of two alpha and two beta chains.

It catalyses the reaction (1S,2R)-1-C-(indol-3-yl)glycerol 3-phosphate + L-serine = D-glyceraldehyde 3-phosphate + L-tryptophan + H2O. The protein operates within amino-acid biosynthesis; L-tryptophan biosynthesis; L-tryptophan from chorismate: step 5/5. Functionally, the alpha subunit is responsible for the aldol cleavage of indoleglycerol phosphate to indole and glyceraldehyde 3-phosphate. The chain is Tryptophan synthase alpha chain from Helicobacter pylori (strain J99 / ATCC 700824) (Campylobacter pylori J99).